Reading from the N-terminus, the 314-residue chain is Olfactory receptor 51I1 (314 aa).

At 1–27 (MLGLNGTPFQPATLQLTGIPGIQTGLT) the chain is on the extracellular side. Residues 28–48 (WVALIFCILYMISIVGNLSIL) traverse the membrane as a helical segment. Topologically, residues 49-56 (TLVFWEPA) are cytoplasmic. Residues 57–77 (LHQPMYYFLSMLALNDLGVSF) form a helical membrane-spanning segment. The Extracellular segment spans residues 78 to 101 (STLPTVISTFCFNYNHVAFNACLV). A disulfide bridge links cysteine 99 with cysteine 191. A helical transmembrane segment spans residues 102-122 (QMFFIHTFSFMESGILLAMSL). Residues 123 to 141 (DRFVAICYPLRYVTVLTHN) are Cytoplasmic-facing. The chain crosses the membrane as a helical span at residues 142–162 (RILAMGLGILTKSFTTLFPFP). Residues 163 to 198 (FVVKRLPFCKGNVLHHSYCLHPDLMKVACGDIHVNN) are Extracellular-facing. Residues 199 to 219 (IYGLLVIIFTYGMDSTFILLS) traverse the membrane as a helical segment. The Cytoplasmic portion of the chain corresponds to 220–239 (YALILRAMLVIISQEQRLKA). Residues 240–260 (LNTCMSHICAVLAFYVPIIAV) form a helical membrane-spanning segment. Residues 261 to 275 (SMIHRFWKSAPPVVH) are Extracellular-facing. A helical transmembrane segment spans residues 276–296 (VMMSNVYLFVPPMLNPIIYSV). Topologically, residues 297-314 (KTKEIRKGILKFFHKSQA) are cytoplasmic.

It belongs to the G-protein coupled receptor 1 family.

The protein resides in the cell membrane. Its function is as follows. Odorant receptor. The protein is Olfactory receptor 51I1 (OR51I1) of Homo sapiens (Human).